The following is a 264-amino-acid chain: Probable pectate lyase D (264 aa).

Residues M1 to A17 form the signal peptide. A glycan (N-linked (GlcNAc...) asparagine) is linked at N60. The disordered stretch occupies residues Y234 to C264. Acidic residues predominate over residues E235–Q245. The segment covering E246 to Q256 has biased composition (polar residues).

It belongs to the polysaccharide lyase 3 family. Ca(2+) serves as cofactor.

The protein resides in the secreted. It catalyses the reaction Eliminative cleavage of (1-&gt;4)-alpha-D-galacturonan to give oligosaccharides with 4-deoxy-alpha-D-galact-4-enuronosyl groups at their non-reducing ends.. Its function is as follows. Pectinolytic enzyme consist of four classes of enzymes: pectin lyase, polygalacturonase, pectin methylesterase and rhamnogalacturonase. Among pectinolytic enzymes, pectin lyase is the most important in depolymerization of pectin, since it cleaves internal glycosidic bonds of highly methylated pectins. Favors pectate, the anion, over pectin, the methyl ester. The polypeptide is Probable pectate lyase D (plyD) (Emericella nidulans (strain FGSC A4 / ATCC 38163 / CBS 112.46 / NRRL 194 / M139) (Aspergillus nidulans)).